We begin with the raw amino-acid sequence, 813 residues long: Polycomb group protein FERTILIZATION-INDEPENDENT SEED 2 (813 aa).

The disordered stretch occupies residues 1-27; that stretch reads MARKSIRGKEVVMVSDDDDDDDDVDDD. Positions 15-26 are enriched in acidic residues; sequence SDDDDDDDDVDD. A C2H2-type zinc finger spans residues 134-155; sequence CPFCLIPCGGHEGLQLHLKSSH. Disordered regions lie at residues 197–216, 232–261, and 274–648; these read SPLTFCSKNRNQRRQRDDSN, DLPRGTENDSTHVNDDNVSSPPRAHSSEKI, and ESSE…RKEL. Over residues 232 to 246 the composition is skewed to basic and acidic residues; that stretch reads DLPRGTENDSTHVND. The A-1 repeat unit spans residues 243–264; sequence HVNDDNVSSPPRAHSSEKISDI. The tract at residues 243-542 is 12 X approximate repeat A; sequence HVNDDNVSSP…HSSKKNKSTR (300 aa). The B-1 repeat unit spans residues 265–281; sequence LTTTQLAIAESSEPKVP. Positions 265 to 640 are 7 X approximate repeat B; that stretch reads LTTTQLAIAE…KAEPSEPKVT (376 aa). An A-2 repeat occupies 282-304; that stretch reads HVNDGNVSSPPRAHSSAEKNEST. Composition is skewed to basic and acidic residues over residues 296 to 307, 319 to 331, and 344 to 353; these read SSAEKNESTHVN, HSLEKNESTHVNE, and KKNESTHMND. The stretch at 305–327 is one A-3 repeat; that stretch reads HVNDDDDVSSPPRAHSLEKNEST. Residues 328 to 349 form an A-4 repeat; that stretch reads HVNEDNISSPPKAHSSKKNEST. Residues 350 to 371 form an A-5 repeat; sequence HMNDEDVSFPPRTRSSKETSDI. Residues 372–388 form a B-2 repeat; the sequence is LTTTQPAIVEPSEPKVR. Over residues 388-402 the composition is skewed to basic residues; that stretch reads RRGSRRKQLYAKRYK. One copy of the B-3 repeat lies at 403 to 419; the sequence is ARETQPAIAESSEPKVL. Composition is skewed to basic and acidic residues over residues 414-423 and 453-462; these read SEPKVLHVND and SEPKVPHVND. The A-6 repeat unit spans residues 420–441; it reads HVNDENVSSPPEAHSLEKASDI. One copy of the B-4 repeat lies at 442 to 458; the sequence is LTTTQPAIAESSEPKVP. The stretch at 459 to 481 is one A-7 repeat; it reads HVNDENVSSTPRAHSSKKNKSTR. The span at 472–481 shows a compositional bias: basic residues; that stretch reads HSSKKNKSTR. The A-8 repeat unit spans residues 482–502; sequence KNVDNVPSPPKTRSSKKTSDI. The segment covering 501-512 has biased composition (polar residues); sequence DILTTTQPTIAE. A B-5 repeat occupies 503 to 519; it reads LTTTQPTIAESSEPKVR. Positions 514–523 are enriched in basic and acidic residues; it reads SEPKVRHVND. An A-9 repeat occupies 520–542; that stretch reads HVNDDNVSSTPRAHSSKKNKSTR. One copy of the A-10 repeat lies at 543-563; it reads KNDDNIPSPPKTRSSKKTSNI. Residues 564 to 579 form a B-6 repeat; sequence LTRTQPAIAESEPKVP. A compositionally biased stretch (basic and acidic residues) spans 574–586; the sequence is SEPKVPHVNDDKV. An A-11 repeat occupies 580-601; sequence HVNDDKVSSTPRAHSSKKNKST. The span at 593-602 shows a compositional bias: basic residues; that stretch reads HSSKKNKSTH. Residues 602 to 623 form an A-12 repeat; the sequence is HKKDDNASLPPKTRSSKKTSDI. Residues 624 to 640 form a B-7 repeat; the sequence is LATTQPAKAEPSEPKVT. Positions 648–783 are VEFS-box; that stretch reads LHAERCEAKR…CAKTFHKCTT (136 aa).

This sequence belongs to the VEFS (VRN2-EMF2-FIS2-SU(Z)12) family. In terms of assembly, probably indirectly associated with FIE and/or MEA. In plants, PcG complexes are probably composed of a member of the EZ family (CLF or MEA), FIE, and a member of the VEFS family (FIS2, VRN2 or EMF2). As to expression, weakly expressed. Expressed in late siliques.

It is found in the nucleus. Functionally, polycomb group (PcG) protein. PcG proteins act by forming multiprotein complexes, which are required to maintain the transcriptionally repressive state of homeotic genes throughout development. PcG proteins are not required to initiate repression, but to maintain it during later stages of development. They probably act via the methylation of histones, rendering chromatin heritably changed in its expressibility. Required to prevent the proliferation of the central cell by repressing unknown target genes before fertilization. Regulates the anteroposterior organization of the endosperm. This is Polycomb group protein FERTILIZATION-INDEPENDENT SEED 2 from Arabidopsis thaliana (Mouse-ear cress).